Reading from the N-terminus, the 176-residue chain is F(420)H(2) dehydrogenase subunit J (176 aa).

The next 5 membrane-spanning stretches (helical) occupy residues 13-33 (TAVF…VVIA), 39-59 (AGLA…LLNA), 64-84 (VIQV…AVML), 99-119 (PLAF…AFGT), and 140-160 (IGML…IVLL).

Belongs to the complex I subunit 6 family. In terms of assembly, the FPO complex is composed of at least 13 different subunits. FpoA, FpoH, FpoJ, FpoK, FpoL, FpoM and FpoN proteins constitute the membrane sector of the complex.

It localises to the cell membrane. It carries out the reaction methanophenazine + reduced coenzyme F420-(gamma-L-Glu)(n) = dihydromethanophenazine + oxidized coenzyme F420-(gamma-L-Glu)(n) + H(+). Its function is as follows. Component of the F(420)H(2) dehydrogenase (FPO complex) which is part of the energy-conserving F(420)H(2):heterodisulfide oxidoreductase system. The membrane-bound electron transfer system of the complex plays an important role in the metabolism of methylotrophic methanogens when the organisms grow on methanol or methylamines. Catalyzes the oxidation of methanophenazine to dihydromethanophenazine. It shuttles electrons from F(420)H(2), via FAD and iron-sulfur (Fe-S) centers, to methanophenazine (an electron carrier in the membrane). It couples the redox reaction to proton translocation (for every two electrons transferred, two hydrogen ions are translocated across the cytoplasmic membrane), and thus conserves the redox energy in a proton gradient. It also catalyzes the oxidation of F(420)H(2) with quinones such as 2,3-dimethyl-1,4-naphthoquinone, 2-methyl-1,4-naphthoquinone and tetramethyl-p-benzoquinone. This Methanosarcina mazei (strain ATCC BAA-159 / DSM 3647 / Goe1 / Go1 / JCM 11833 / OCM 88) (Methanosarcina frisia) protein is F(420)H(2) dehydrogenase subunit J (fpoJ).